The sequence spans 65 residues: Transcriptional regulatory protein SenS (65 aa).

Residues 11-31 (RFRKRKTYGNQILPLELLIEK) constitute a DNA-binding region (H-T-H motif).

To B.natto SenN.

Regulates the expression of extracellular-protein genes of Bacillus subtilis. The chain is Transcriptional regulatory protein SenS (senS) from Bacillus subtilis (strain 168).